The chain runs to 152 residues: SsrA-binding protein (152 aa).

Residues 129–140 (KREDMKKKDSQR) show a composition bias toward basic and acidic residues. Positions 129–152 (KREDMKKKDSQRELSQALKSKNRE) are disordered. Residues 141-152 (ELSQALKSKNRE) are compositionally biased toward polar residues.

This sequence belongs to the SmpB family.

The protein localises to the cytoplasm. Required for rescue of stalled ribosomes mediated by trans-translation. Binds to transfer-messenger RNA (tmRNA), required for stable association of tmRNA with ribosomes. tmRNA and SmpB together mimic tRNA shape, replacing the anticodon stem-loop with SmpB. tmRNA is encoded by the ssrA gene; the 2 termini fold to resemble tRNA(Ala) and it encodes a 'tag peptide', a short internal open reading frame. During trans-translation Ala-aminoacylated tmRNA acts like a tRNA, entering the A-site of stalled ribosomes, displacing the stalled mRNA. The ribosome then switches to translate the ORF on the tmRNA; the nascent peptide is terminated with the 'tag peptide' encoded by the tmRNA and targeted for degradation. The ribosome is freed to recommence translation, which seems to be the essential function of trans-translation. This Pelobacter propionicus (strain DSM 2379 / NBRC 103807 / OttBd1) protein is SsrA-binding protein.